A 795-amino-acid chain; its full sequence is Probable alpha,alpha-trehalose-phosphate synthase [UDP-forming] 4 (795 aa).

A glycosyltransferase region spans residues 4 to 469 (PRLLVVSMSL…WADDFMKLTL (466 aa)).

It in the N-terminal section; belongs to the glycosyltransferase 20 family. The protein in the C-terminal section; belongs to the trehalose phosphatase family.

It catalyses the reaction D-glucose 6-phosphate + UDP-alpha-D-glucose = alpha,alpha-trehalose 6-phosphate + UDP + H(+). This chain is Probable alpha,alpha-trehalose-phosphate synthase [UDP-forming] 4 (TPS4), found in Arabidopsis thaliana (Mouse-ear cress).